A 382-amino-acid polypeptide reads, in one-letter code: uncharacterized protein (382 aa).

Residues 1-7 (MSIYTRP) are Cytoplasmic-facing. A helical transmembrane segment spans residues 8-28 (VMLLLCGLLLLTLAIAVLNTL). The Periplasmic portion of the chain corresponds to 29 to 44 (VPLWLAQANLPTWQVG). A helical transmembrane segment spans residues 45–65 (MVSSSYFTGNLVGTLFTGYLI). Over 66–74 (KRIGFNRSY) the chain is Cytoplasmic. The helical transmembrane segment at 75–95 (YLASLIFAAGCVGLGVMVGFW) threads the bilayer. Residues 96–101 (SWMSWR) are Periplasmic-facing. Residues 102 to 122 (FIAGIGCAMIWVVVESALMCS) form a helical membrane-spanning segment. Topologically, residues 123–130 (GTSHNRGR) are cytoplasmic. Residues 131–151 (LLAAYMMVYYMGTFLGQLLVS) traverse the membrane as a helical segment. The Periplasmic portion of the chain corresponds to 152–156 (KVSGE). A helical membrane pass occupies residues 157 to 177 (LLHVLPWVTGMILAGILPLLF). Residues 178-203 (TRIVNQQTQARHSSSISAMLKLRQAR) are Cytoplasmic-facing. A helical transmembrane segment spans residues 204-224 (LGVNGCIISGIVLGSLYGLMP). Residues 225–230 (LYLKHQ) are Periplasmic-facing. The helical transmembrane segment at 231 to 251 (GMANASIGFWMAVLVSAGILG) threads the bilayer. Residues 252–269 (QWPMGRLADKFGRLLVLR) lie on the Cytoplasmic side of the membrane. Helical transmembrane passes span 270-290 (VQVFVVILGSIAMLTQAAMAP) and 291-311 (ALFILGAAGFTLYPVAMAWAC). Residues 312–324 (EKVEHHQLVAMNQ) lie on the Cytoplasmic side of the membrane. A helical membrane pass occupies residues 325 to 345 (ALLLSYTVGSLLGPSFAAMLM). At 346 to 348 (QNY) the chain is on the periplasmic side. The helical transmembrane segment at 349-369 (SDNLLFIMIASVSFIYLLMLL) threads the bilayer. Over 370–382 (RNVGQTPNPVAHI) the chain is Cytoplasmic.

Belongs to the major facilitator superfamily. YcaD (TC 2.A.1.26) family.

It localises to the cell inner membrane. This is an uncharacterized protein from Salmonella typhi.